A 296-amino-acid polypeptide reads, in one-letter code: Small ribosomal subunit biogenesis GTPase RsgA (296 aa).

The 159-residue stretch at 65-223 (INRIGRPAVA…LADTPGFSSI (159 aa)) folds into the CP-type G domain. Residues 114–117 (SKAD) and 166–174 (GQSGAGKST) each bind GTP. Residues Cys247, Cys252, His254, and Cys260 each contribute to the Zn(2+) site.

The protein belongs to the TRAFAC class YlqF/YawG GTPase family. RsgA subfamily. Monomer. Associates with 30S ribosomal subunit, binds 16S rRNA. Requires Zn(2+) as cofactor.

Its subcellular location is the cytoplasm. Functionally, one of several proteins that assist in the late maturation steps of the functional core of the 30S ribosomal subunit. Helps release RbfA from mature subunits. May play a role in the assembly of ribosomal proteins into the subunit. Circularly permuted GTPase that catalyzes slow GTP hydrolysis, GTPase activity is stimulated by the 30S ribosomal subunit. This Lactobacillus acidophilus (strain ATCC 700396 / NCK56 / N2 / NCFM) protein is Small ribosomal subunit biogenesis GTPase RsgA.